Consider the following 382-residue polypeptide: Alkanesulfonate monooxygenase (382 aa).

This sequence belongs to the SsuD family. Homotetramer.

It carries out the reaction an alkanesulfonate + FMNH2 + O2 = an aldehyde + FMN + sulfite + H2O + 2 H(+). In terms of biological role, catalyzes the desulfonation of aliphatic sulfonates. This Serratia proteamaculans (strain 568) protein is Alkanesulfonate monooxygenase.